Consider the following 294-residue polypeptide: 33 kDa chaperonin (294 aa).

2 disulfides stabilise this stretch: Cys-239/Cys-241 and Cys-272/Cys-275.

Belongs to the HSP33 family. Post-translationally, under oxidizing conditions two disulfide bonds are formed involving the reactive cysteines. Under reducing conditions zinc is bound to the reactive cysteines and the protein is inactive.

Its subcellular location is the cytoplasm. Redox regulated molecular chaperone. Protects both thermally unfolding and oxidatively damaged proteins from irreversible aggregation. Plays an important role in the bacterial defense system toward oxidative stress. The sequence is that of 33 kDa chaperonin from Listeria innocua serovar 6a (strain ATCC BAA-680 / CLIP 11262).